Reading from the N-terminus, the 217-residue chain is 7-cyano-7-deazaguanine synthase (217 aa).

7–17 contributes to the ATP binding site; that stretch reads LSGGMDSTTLL. Residues Cys-183, Cys-191, Cys-194, and Cys-197 each contribute to the Zn(2+) site.

This sequence belongs to the QueC family. It depends on Zn(2+) as a cofactor.

It catalyses the reaction 7-carboxy-7-deazaguanine + NH4(+) + ATP = 7-cyano-7-deazaguanine + ADP + phosphate + H2O + H(+). It participates in purine metabolism; 7-cyano-7-deazaguanine biosynthesis. Functionally, catalyzes the ATP-dependent conversion of 7-carboxy-7-deazaguanine (CDG) to 7-cyano-7-deazaguanine (preQ(0)). This Methanoregula boonei (strain DSM 21154 / JCM 14090 / 6A8) protein is 7-cyano-7-deazaguanine synthase.